A 148-amino-acid polypeptide reads, in one-letter code: Meiosis inducing protein mei3 (148 aa).

Positions M1 to P20 are enriched in polar residues. Residues M1–E96 are disordered. Residues N21–K46 are compositionally biased toward low complexity. The segment covering P75–P86 has biased composition (basic residues).

In terms of biological role, acts as a critical meiotic inducer by binding non-covalently to protein kinase ran1/pat1 inhibiting its enzymatic activity. Inhibits ran1/pat1 by acting as a pseudosubstrate for ran1/pat1 instead of its natural substrate ste11. Inactivation of the ran1/pat1 protein kinase is both necessary and sufficient to divert a vegetative cell from mitotic division to meiotic differentiation. This Schizosaccharomyces pombe (strain 972 / ATCC 24843) (Fission yeast) protein is Meiosis inducing protein mei3.